The sequence spans 555 residues: Suppressor of tumorigenicity 7 protein-like (555 aa).

Transmembrane regions (helical) follow at residues 36–56 (GLAGTGASLWFVAGLGLLYAL) and 80–100 (FYVALTGTSSLISGLIFIFEW). Positions 126-148 (TESSISEPGSPSNNRESETSRQN) are disordered.

The protein belongs to the ST7 family.

It localises to the membrane. The protein is Suppressor of tumorigenicity 7 protein-like (ST7L) of Bos taurus (Bovine).